The primary structure comprises 179 residues: Archaemetzincin (179 aa).

His128 is a binding site for Zn(2+). Glu129 functions as the Proton acceptor in the catalytic mechanism. Zn(2+)-binding residues include His132, His138, Cys139, Cys144, Cys163, and Cys166.

This sequence belongs to the peptidase M54 family. In terms of assembly, monomer. The cofactor is Zn(2+).

In terms of biological role, probable zinc metalloprotease whose natural substrate is unknown. This is Archaemetzincin from Methanocaldococcus jannaschii (strain ATCC 43067 / DSM 2661 / JAL-1 / JCM 10045 / NBRC 100440) (Methanococcus jannaschii).